A 505-amino-acid polypeptide reads, in one-letter code: Elsinochrome transporter 1 (505 aa).

Gly residues predominate over residues 1–10 (MALSGLGSGP). Residues 1–25 (MALSGLGSGPEGNPNNHQGKAIPTL) form a disordered region. Residues 35–55 (FLFSWVSFLVPFWSWYPFSPL) form a helical membrane-spanning segment. N-linked (GlcNAc...) asparagine glycans are attached at residues N64 and N80. The segment at 221-295 (DTPTGAGKPP…TEKGESLPLT (75 aa)) is disordered. A compositionally biased stretch (low complexity) spans 255–267 (TPSSPDRSSSTNS). Transmembrane regions (helical) follow at residues 313-333 (VIFSGPTLVLGACYFCTFGAE), 348-368 (LGLGLQNAGNLAAIFGLLNIV), 391-411 (KALLHTYCVMTGVFCIAIGLA), 417-437 (ATLVGLVSGGLAFFLEGANGL), 449-469 (VVSGFTGACGNLGGIVFAIVF), and 479-499 (VFWIIGAIIIGLQVATCWIKP).

Belongs to the major facilitator superfamily. Nitrate/nitrite porter (TC 2.A.1.8) family.

It localises to the cell membrane. Its function is as follows. Major facilitator-type transporter; part of the gene cluster that mediates the biosynthesis of elsinochromes, pigments consisting of at least four interconvertible tautomers (A, B, C and D) that have a core phenolic quinone to which various side chains are attached and which play an important role in fungal pathogenesis. Once elsinochrome is synthesized, it must be exported outside the fungal cells, which is probably accomplished by the ECT1 transporter, to avoid toxicity. The polypeptide is Elsinochrome transporter 1 (Elsinoe fawcettii (Citrus scab fungus)).